We begin with the raw amino-acid sequence, 328 residues long: MNQQTTNRDTGEAAATNAPANSATSTSTPDNQPTPLDAFEVLLITGMSGAGRSHAADCVEDMGWYVVDNLPPKLLIPLVDMMTTSGSGSESGVHKLAAVIDVRSSYFDELAAVLGHLDDLGVKTRILFLDASNEVLIKRYESVRRPHPLQHGNRLIDGILEERHLLEDLKERADWVIDTSSLSIHQLSTKLYEAMLGSGPTTVAVHIFSFGFKYGMPIDADFVADVRFLPNPFWVPNLRELTGHDKPVADYVLSSKGAKEFLDAYEKAIEIALEGYAQEDKHYVTIAVGCTGGQHRSVAMSEELARRLRAHGLNVTVSAREQHKRHSS.

The tract at residues 1 to 35 (MNQQTTNRDTGEAAATNAPANSATSTSTPDNQPTP) is disordered. The span at 13–29 (AAATNAPANSATSTSTP) shows a compositional bias: low complexity. Residue 46–53 (GMSGAGRS) coordinates ATP. 101–104 (DVRS) serves as a coordination point for GTP.

The protein belongs to the RapZ-like family.

Its function is as follows. Displays ATPase and GTPase activities. In Bifidobacterium longum (strain DJO10A), this protein is Nucleotide-binding protein BLD_0430.